The sequence spans 302 residues: Sulfate adenylyltransferase subunit 2 (302 aa).

The protein belongs to the PAPS reductase family. CysD subfamily. As to quaternary structure, heterodimer composed of CysD, the smaller subunit, and CysN.

The catalysed reaction is sulfate + ATP + H(+) = adenosine 5'-phosphosulfate + diphosphate. Its pathway is sulfur metabolism; hydrogen sulfide biosynthesis; sulfite from sulfate: step 1/3. Its function is as follows. With CysN forms the ATP sulfurylase (ATPS) that catalyzes the adenylation of sulfate producing adenosine 5'-phosphosulfate (APS) and diphosphate, the first enzymatic step in sulfur assimilation pathway. APS synthesis involves the formation of a high-energy phosphoric-sulfuric acid anhydride bond driven by GTP hydrolysis by CysN coupled to ATP hydrolysis by CysD. The protein is Sulfate adenylyltransferase subunit 2 of Pectobacterium carotovorum subsp. carotovorum (strain PC1).